The chain runs to 411 residues: L-cysteine:1D-myo-inositol 2-amino-2-deoxy-alpha-D-glucopyranoside ligase (411 aa).

C43 provides a ligand contact to Zn(2+). Residues 43 to 46 (CGIT), T58, and 81 to 83 (NVT) contribute to the L-cysteinyl-5'-AMP site. The short motif at 45 to 55 (ITPYDATHLGH) is the 'HIGH' region element. The 'ERGGDP' region motif lies at 186-191 (QRGGDP). W226 lines the L-cysteinyl-5'-AMP pocket. C230 contributes to the Zn(2+) binding site. 248–250 (GSD) provides a ligand contact to L-cysteinyl-5'-AMP. Residue H255 coordinates Zn(2+). L-cysteinyl-5'-AMP is bound at residue I282. A 'KMSKS' region motif is present at residues 288–292 (KMSKS).

This sequence belongs to the class-I aminoacyl-tRNA synthetase family. MshC subfamily. Monomer. Zn(2+) is required as a cofactor.

It catalyses the reaction 1D-myo-inositol 2-amino-2-deoxy-alpha-D-glucopyranoside + L-cysteine + ATP = 1D-myo-inositol 2-(L-cysteinylamino)-2-deoxy-alpha-D-glucopyranoside + AMP + diphosphate + H(+). Functionally, catalyzes the ATP-dependent condensation of GlcN-Ins and L-cysteine to form L-Cys-GlcN-Ins. This Mycobacterium ulcerans (strain Agy99) protein is L-cysteine:1D-myo-inositol 2-amino-2-deoxy-alpha-D-glucopyranoside ligase.